The sequence spans 385 residues: Transcription termination factor 2, mitochondrial (385 aa).

The transit peptide at 1-35 (MLWKLLLRSQSCRLCSFRKMRSPPKYRPFLACFTY) directs the protein to the mitochondrion.

This sequence belongs to the mTERF family. In terms of assembly, monomer. Expressed in skeletal muscle, heart, liver and pancreas.

The protein localises to the mitochondrion. It localises to the mitochondrion matrix. It is found in the mitochondrion nucleoid. Functionally, binds mitochondrial DNA and plays a role in the regulation of transcription of mitochondrial mRNA and rRNA species. This chain is Transcription termination factor 2, mitochondrial (MTERF2), found in Homo sapiens (Human).